The primary structure comprises 237 residues: Ribonuclease PH (237 aa).

Residues R86 and 124–126 (GTR) contribute to the phosphate site.

This sequence belongs to the RNase PH family. In terms of assembly, homohexameric ring arranged as a trimer of dimers.

The enzyme catalyses tRNA(n+1) + phosphate = tRNA(n) + a ribonucleoside 5'-diphosphate. In terms of biological role, phosphorolytic 3'-5' exoribonuclease that plays an important role in tRNA 3'-end maturation. Removes nucleotide residues following the 3'-CCA terminus of tRNAs; can also add nucleotides to the ends of RNA molecules by using nucleoside diphosphates as substrates, but this may not be physiologically important. Probably plays a role in initiation of 16S rRNA degradation (leading to ribosome degradation) during starvation. This chain is Ribonuclease PH, found in Cereibacter sphaeroides (strain ATCC 17025 / ATH 2.4.3) (Rhodobacter sphaeroides).